The chain runs to 861 residues: Probable beta-glucosidase A (861 aa).

The signal sequence occupies residues 1-19; sequence MKLGWIEVAALAAASVVSA. N-linked (GlcNAc...) asparagine glycans are attached at residues Asn-62, Asn-212, and Asn-253. Residue Asp-281 is part of the active site. N-linked (GlcNAc...) asparagine glycosylation is found at Asn-316, Asn-323, Asn-355, Asn-443, Asn-524, Asn-543, Asn-565, Asn-669, Asn-713, and Asn-846.

It belongs to the glycosyl hydrolase 3 family.

It localises to the secreted. The enzyme catalyses Hydrolysis of terminal, non-reducing beta-D-glucosyl residues with release of beta-D-glucose.. Its pathway is glycan metabolism; cellulose degradation. Its function is as follows. Beta-glucosidases are one of a number of cellulolytic enzymes involved in the degradation of cellulosic biomass. Catalyzes the last step releasing glucose from the inhibitory cellobiose. This is Probable beta-glucosidase A (bglA) from Aspergillus flavus (strain ATCC 200026 / FGSC A1120 / IAM 13836 / NRRL 3357 / JCM 12722 / SRRC 167).